A 510-amino-acid polypeptide reads, in one-letter code: MLLEETEPPNQTLDHVLSWLEDSVSLSPLPGFDDSYLLHEFDGSQTWEWDQTQDPEHGFIQSYSQDLSAAYVGCEATNLEVVTEAPSIDLDLPPEIQQPNDQSRKRSHDGFLEAQQVKKSARSKRKAIKSSEKSSKDGNKEGRWAEKLLNPCALAITASNSSRVQHYLCVLSELASSSGDANRRLAAFGLRALQHHLSSSSVSSSFWPVFTFASAEVKMFQKTLLKFYEVSPWFALPNNMANSAILQILAQDPKDKKDLHIIDIGVSHGMQWPTLLEALSCRLEGPPPRVRITVISDLTADIPFSVGPPGYNYGSQLLGFARSLKINLQISVLDKLQLIDTSPHENLIVCAQFRLHHLKHSINDERGETLKAVRSLRPKGVVLCENNGECSSSADFAAGFSKKLEYVWKFLDSTSSGFKEENSEERKLMEGEATKVLMNAGDMNEGKEKWYERMREAGFFVEAFEEDAVDGAKSLLRKYDNNWEIRMEDGDTFAGLMWKGEAVSFCSLWK.

The tract at residues 90–142 is disordered; the sequence is LDLPPEIQQPNDQSRKRSHDGFLEAQQVKKSARSKRKAIKSSEKSSKDGNKEG. A compositionally biased stretch (basic and acidic residues) spans 102–111; it reads QSRKRSHDGF. Positions 119–128 are enriched in basic residues; the sequence is KSARSKRKAI. The segment covering 129–142 has biased composition (basic and acidic residues); it reads KSSEKSSKDGNKEG. Positions 136 to 510 constitute a GRAS domain; it reads KDGNKEGRWA…EAVSFCSLWK (375 aa). Residues 143–205 form a leucine repeat I (LRI) region; sequence RWAEKLLNPC…HLSSSSVSSS (63 aa). Residues 224 to 294 are VHIID; that stretch reads LLKFYEVSPW…GPPPRVRITV (71 aa). Positions 259 to 263 match the VHIID motif; that stretch reads LHIID. The interval 312 to 337 is leucine repeat II (LRII); it reads NYGSQLLGFARSLKINLQISVLDKLQ. The tract at residues 347 to 435 is PFYRE; the sequence is LIVCAQFRLH…RKLMEGEATK (89 aa). Residues 438–510 are SAW; sequence MNAGDMNEGK…EAVSFCSLWK (73 aa).

It belongs to the GRAS family. In terms of tissue distribution, expressed in seedlings, roots and flowers.

It is found in the nucleus. Functionally, probable transcription factor involved in plant development. This Arabidopsis thaliana (Mouse-ear cress) protein is Scarecrow-like protein 29 (SCL29).